We begin with the raw amino-acid sequence, 512 residues long: MEEFQGYLKKDRSLQQHFLYPLLLQEYIYTLAHDDSLNGSIFYEPIEFIGYDNKFSLVLVKRLITRMYQQNFLIYLVNDSNQNRFGGHTNYFYSHFFYSKMVSKGFSVIVEIPFSLRLVSSSEEKEIPKSQNLGSIHSIFPFLEDKLSHLNNVSDILIPHPIHFEILVQILQCWIQDVPSLHLLRFFLHKYQNLNKTIQSNKTIYVFSKENKRLFWFLYNSYVSECEFLLVFFHKQSCYLRSTSSGAFLERSHFYGKMEHIIIVCCNNFQKTLWPVKDPLIHYVRYQGKAILASRGTHLLMKKWRYYFVNFWQYYFHFWSQPYRMHINSLLNYSFYFMGYLLRVLINPYAVKNQMLENSFLIDTVIKKFDTIIPIIPLIGSLSKAKFCTFSGHPISKPIWADFSDFDIIDRFGRICRNLSHYHNGSSKKQSLYRIKYILRLSCARTLACKHKSTARALLQRLGSGLLEEFFTEEEQVLSFIFPKTTLFTLHGSHRERIWSLDIIRINDLVNN.

This sequence belongs to the intron maturase 2 family. MatK subfamily.

The protein resides in the plastid. The protein localises to the chloroplast. Its function is as follows. Usually encoded in the trnK tRNA gene intron. Probably assists in splicing its own and other chloroplast group II introns. The polypeptide is Maturase K (Lilium canadense (Canada lily)).